The primary structure comprises 623 residues: Putative disease resistance protein At5g47280 (623 aa).

2 NB-ARC domains span residues 2-51 (LFNL…VSQS) and 119-249 (VDPR…NMLV). Residue 16-23 (GMIGSGKT) coordinates ATP. LRR repeat units lie at residues 488-511 (SLNS…SKLQ), 512-534 (ALQL…ICEL), 536-558 (RLVY…IGNV), and 560-581 (TLEK…AVSL).

This sequence belongs to the disease resistance NB-LRR family.

In terms of biological role, potential disease resistance protein. The protein is Putative disease resistance protein At5g47280 of Arabidopsis thaliana (Mouse-ear cress).